We begin with the raw amino-acid sequence, 926 residues long: Probable zinc protease PqqL (926 aa).

H79 provides a ligand contact to Zn(2+). E82 functions as the Proton acceptor in the catalytic mechanism. 2 residues coordinate Zn(2+): H83 and E159.

It belongs to the peptidase M16 family. Requires Zn(2+) as cofactor.

This chain is Probable zinc protease PqqL (pqqL), found in Haemophilus influenzae (strain ATCC 51907 / DSM 11121 / KW20 / Rd).